The sequence spans 369 residues: Chorismate synthase (369 aa).

Positions 48 and 54 each coordinate NADP(+). Residues 125–127 (RSS), 238–239 (NA), Gly278, 293–297 (KPTSS), and Arg319 contribute to the FMN site.

It belongs to the chorismate synthase family. As to quaternary structure, homotetramer. FMNH2 serves as cofactor.

The catalysed reaction is 5-O-(1-carboxyvinyl)-3-phosphoshikimate = chorismate + phosphate. The protein operates within metabolic intermediate biosynthesis; chorismate biosynthesis; chorismate from D-erythrose 4-phosphate and phosphoenolpyruvate: step 7/7. Functionally, catalyzes the anti-1,4-elimination of the C-3 phosphate and the C-6 proR hydrogen from 5-enolpyruvylshikimate-3-phosphate (EPSP) to yield chorismate, which is the branch point compound that serves as the starting substrate for the three terminal pathways of aromatic amino acid biosynthesis. This reaction introduces a second double bond into the aromatic ring system. In Burkholderia thailandensis (strain ATCC 700388 / DSM 13276 / CCUG 48851 / CIP 106301 / E264), this protein is Chorismate synthase.